Consider the following 115-residue polypeptide: UPF0295 protein BPUM_0828 (115 aa).

The next 2 helical transmembrane spans lie at 13 to 33 (TFALSLVFVGFLIMYIGVFFK) and 41 to 61 (FFMLLGVLSIGLSTVVYFWIG).

It belongs to the UPF0295 family.

It localises to the cell membrane. This is UPF0295 protein BPUM_0828 from Bacillus pumilus (strain SAFR-032).